The following is a 439-amino-acid chain: Ribosomal protein uS12 methylthiotransferase RimO (439 aa).

In terms of domain architecture, MTTase N-terminal spans 2 to 114 (SKLYLMSLGC…IDEMILKKTN (113 aa)). Residues Cys-11, Cys-45, Cys-77, Cys-146, Cys-150, and Cys-153 each coordinate [4Fe-4S] cluster. The Radical SAM core domain maps to 132-363 (TGSNSHAFIK…VDEVIEKSFE (232 aa)).

Belongs to the methylthiotransferase family. RimO subfamily. The cofactor is [4Fe-4S] cluster.

Its subcellular location is the cytoplasm. It carries out the reaction L-aspartate(89)-[ribosomal protein uS12]-hydrogen + (sulfur carrier)-SH + AH2 + 2 S-adenosyl-L-methionine = 3-methylsulfanyl-L-aspartate(89)-[ribosomal protein uS12]-hydrogen + (sulfur carrier)-H + 5'-deoxyadenosine + L-methionine + A + S-adenosyl-L-homocysteine + 2 H(+). Functionally, catalyzes the methylthiolation of an aspartic acid residue of ribosomal protein uS12. The sequence is that of Ribosomal protein uS12 methylthiotransferase RimO from Campylobacter jejuni subsp. jejuni serotype O:23/36 (strain 81-176).